A 476-amino-acid polypeptide reads, in one-letter code: Aspartyl/glutamyl-tRNA(Asn/Gln) amidotransferase subunit B (476 aa).

The protein belongs to the GatB/GatE family. GatB subfamily. In terms of assembly, heterotrimer of A, B and C subunits.

The catalysed reaction is L-glutamyl-tRNA(Gln) + L-glutamine + ATP + H2O = L-glutaminyl-tRNA(Gln) + L-glutamate + ADP + phosphate + H(+). It carries out the reaction L-aspartyl-tRNA(Asn) + L-glutamine + ATP + H2O = L-asparaginyl-tRNA(Asn) + L-glutamate + ADP + phosphate + 2 H(+). Functionally, allows the formation of correctly charged Asn-tRNA(Asn) or Gln-tRNA(Gln) through the transamidation of misacylated Asp-tRNA(Asn) or Glu-tRNA(Gln) in organisms which lack either or both of asparaginyl-tRNA or glutaminyl-tRNA synthetases. The reaction takes place in the presence of glutamine and ATP through an activated phospho-Asp-tRNA(Asn) or phospho-Glu-tRNA(Gln). This is Aspartyl/glutamyl-tRNA(Asn/Gln) amidotransferase subunit B from Neisseria meningitidis serogroup C (strain 053442).